Here is a 513-residue protein sequence, read N- to C-terminus: CUGBP Elav-like family member 1 (513 aa).

Position 31 is a phosphothreonine (threonine 31). 2 consecutive RRM domains span residues 43-126 (IKMF…PADS) and 135-215 (RKLF…FADT). Lysine 136 is covalently cross-linked (Glycyl lysine isopeptide (Lys-Gly) (interchain with G-Cter in SUMO2)). 2 positions are modified to phosphoserine: serine 206 and serine 329. Residues 304-336 (TPSGTNALTTSSSPLSVLTSSGSSPSSSSSNSV) are disordered. Over residues 311–336 (LTTSSSPLSVLTSSGSSPSSSSSNSV) the composition is skewed to low complexity. One can recognise an RRM 3 domain in the interval 428–506 (ANLFIYHLPQ…KRLKVQLKRS (79 aa)).

It belongs to the CELF/BRUNOL family. As to quaternary structure, associates with polysomes. Interacts with HNRNPH1; the interaction in RNA-dependent. Interacts with PARN. Component of an EIF2 complex at least composed of CELF1/CUGBP1, CALR, CALR3, EIF2S1, EIF2S2, HSP90B1 and HSPA5.

The protein localises to the nucleus. Its subcellular location is the cytoplasm. Its function is as follows. RNA-binding protein implicated in the regulation of several post-transcriptional events. Involved in pre-mRNA alternative splicing, mRNA translation and stability. Mediates exon inclusion and/or exclusion in pre-mRNA that are subject to tissue-specific and developmentally regulated alternative splicing. Specifically activates exon 5 inclusion of cardiac isoforms of TNNT2 during heart remodeling at the juvenile to adult transition. Acts both as an activator and as a repressor of a pair of coregulated exons: promotes inclusion of the smooth muscle (SM) exon but exclusion of the non-muscle (NM) exon in actinin pre-mRNAs. Activates SM exon 5 inclusion by antagonizing the repressive effect of PTB. Promotes exclusion of exon 11 of the INSR pre-mRNA. Inhibits, together with HNRNPH1, insulin receptor (IR) pre-mRNA exon 11 inclusion in myoblast. Increases translation and controls the choice of translation initiation codon of CEBPB mRNA. Increases mRNA translation of CEBPB in aging liver. Increases translation of CDKN1A mRNA by antagonizing the repressive effect of CALR3. Mediates rapid cytoplasmic mRNA deadenylation. Recruits the deadenylase PARN to the poly(A) tail of EDEN-containing mRNAs to promote their deadenylation. Required for completion of spermatogenesis. Binds to (CUG)n triplet repeats in the 3'-UTR of transcripts such as DMPK and to Bruno response elements (BREs). Binds to muscle-specific splicing enhancer (MSE) intronic sites flanking the alternative exon 5 of TNNT2 pre-mRNA. Binds to AU-rich sequences (AREs or EDEN-like) localized in the 3'-UTR of JUN and FOS mRNAs. Binds to the IR RNA. Binds to the 5'-region of CDKN1A and CEBPB mRNAs. Binds with the 5'-region of CEBPB mRNA in aging liver. May be a specific regulator of miRNA biogenesis. Binds to primary microRNA pri-MIR140 and, with CELF2, negatively regulates the processing to mature miRNA. The protein is CUGBP Elav-like family member 1 (CELF1) of Pongo abelii (Sumatran orangutan).